Here is a 254-residue protein sequence, read N- to C-terminus: MPQQIELRDIALQAAQPLVHGVSLTLQRGRVLALVGGSGSGKSLTCAAALGILPAGVRQTAGEILADGKPVSPCALRGIKIATIMQNPRSAFNPLHTMHTHARETCLALGKPADDATLTAAIEAVGLENAARVLKLYPFEMSGGMLQRMMIAMAVLCESPFIIADEPTTDLDVVAQARILDLLESIMQKQAPGMLLVTHDMGVVARLADDVAVMSDGKIVEQGDVETLFNAPKHAVTRSLVSAHLALYGMELAS.

Positions 2 to 241 (PQQIELRDIA…PKHAVTRSLV (240 aa)) constitute an ABC transporter domain. ATP is bound at residue 36–43 (GGSGSGKS).

The protein belongs to the ABC transporter superfamily. Nickel importer (TC 3.A.1.5.3) family. The complex is composed of two ATP-binding proteins (NikD and NikE), two transmembrane proteins (NikB and NikC) and a solute-binding protein (NikA).

Its subcellular location is the cell inner membrane. It catalyses the reaction Ni(2+)(out) + ATP + H2O = Ni(2+)(in) + ADP + phosphate + H(+). In terms of biological role, part of the ABC transporter complex NikABCDE involved in nickel import. Responsible for energy coupling to the transport system. This is Nickel import ATP-binding protein NikD from Shigella dysenteriae serotype 1 (strain Sd197).